Here is a 353-residue protein sequence, read N- to C-terminus: Protein RecA (353 aa).

75-82 (GPESSGKT) is an ATP binding site.

It belongs to the RecA family.

Its subcellular location is the cytoplasm. Its function is as follows. Can catalyze the hydrolysis of ATP in the presence of single-stranded DNA, the ATP-dependent uptake of single-stranded DNA by duplex DNA, and the ATP-dependent hybridization of homologous single-stranded DNAs. It interacts with LexA causing its activation and leading to its autocatalytic cleavage. The chain is Protein RecA from Cupriavidus pinatubonensis (strain JMP 134 / LMG 1197) (Cupriavidus necator (strain JMP 134)).